Consider the following 388-residue polypeptide: Carbohydrate sulfotransferase 4 (388 aa).

The Cytoplasmic segment spans residues 1 to 7 (MMLLKKG). Residues 8–28 (RLLMFLGSQVIVVALFIHMSV) form a helical; Signal-anchor for type II membrane protein membrane-spanning segment. Residues 29-388 (HRHLSQREES…HILGQVFREG (360 aa)) are Lumenal-facing. Residues 50–56 (WRSGSSF) and 204–212 (RDPRAVFRS) contribute to the 3'-phosphoadenylyl sulfate site. Residues N307, N328, and N369 are each glycosylated (N-linked (GlcNAc...) asparagine).

It belongs to the sulfotransferase 1 family. Gal/GlcNAc/GalNAc subfamily. In terms of assembly, monomer. As to expression, specifically expressed in high endothelial venules (HEV) of peripheral lymph nodes.

It is found in the golgi apparatus membrane. It catalyses the reaction 3-O-{N-acetyl-beta-D-glucosaminyl-(1-&gt;3)-beta-D-galactosyl-(1-&gt;3)-N-acetyl-alpha-D-galactosaminyl}-L-threonyl-[protein] + 3'-phosphoadenylyl sulfate = 3-O-{6-O-sulfo-N-acetyl-beta-D-glucosaminyl-(1-&gt;3)-beta-D-galactosyl-(1-&gt;3)-N-acetyl-alpha-D-galactosaminyl}-L-threonyl-[protein] + adenosine 3',5'-bisphosphate + H(+). The enzyme catalyses 3-O-{N-acetyl-beta-D-glucosaminyl-(1-&gt;3)-beta-D-galactosyl-(1-&gt;3)-N-acetyl-alpha-D-galactosaminyl}-L-seryl-[protein] + 3'-phosphoadenylyl sulfate = 3-O-{6-O-sulfo-N-acetyl-beta-D-glucosaminyl-(1-&gt;3)-beta-D-galactosyl-(1-&gt;3)-N-acetyl-alpha-D-galactosaminyl}-L-seryl-[protein] + adenosine 3',5'-bisphosphate + H(+). The catalysed reaction is a 3-O-{beta-D-galactosyl-(1-&gt;3)-[N-acetyl-beta-D-glucosaminyl-(1-&gt;6)]-N-acetyl-alpha-D-galactosaminyl}-L-threonyl-[protein] + 3'-phosphoadenylyl sulfate = 3-O-{beta-D-galactosyl-(1-&gt;3)-[6-O-sulfo-N-acetyl-beta-D-glucosaminyl-(1-&gt;6)]-N-acetyl-alpha-D-galactosaminyl}-L-threonyl-[protein] + adenosine 3',5'-bisphosphate + H(+). It carries out the reaction 3-O-{beta-D-galactosyl-(1-&gt;3)-[N-acetyl-beta-D-glucosaminyl-(1-&gt;6)]-N-acetyl-alpha-D-galactosaminyl}-L-seryl-[protein] + 3'-phosphoadenylyl sulfate = 3-O-{beta-D-galactosyl-(1-&gt;3)-[6-O-sulfo-N-acetyl-beta-D-glucosaminyl-(1-&gt;6)]-N-acetyl-alpha-D-galactosaminyl}-L-seryl-[protein] + adenosine 3',5'-bisphosphate + H(+). It functions in the pathway protein modification; carbohydrate sulfation. Its function is as follows. Sulfotransferase involved in SELL/L-selectin ligand biosynthesis pathway. Catalyzes the transfer of the sulfate group from 3'-phospho-5'-adenylyl sulfate (PAPS) onto the hydroxyl group at C-6 position of the non-reducing N-acetylglucosamine (GlcNAc) residue within O-linked mucin-type glycans. Contributes to generate sialyl 6-sulfo Lewis X determinant (also known as MECA-79 epitope) for SELL recognition, a prerequisite for continuous lymphocyte homing into peripheral lymph nodes and antigen immune surveillance. Transfers the sulfate group primarily on core 2 GlcNAcbeta1-6(Galbeta1-3)GalNAcalphaSer/Thr and extended core 1 GlcNAcbeta1-3Galbeta1-3GalNAcalphaSer/Thr based O-linked glycans on CD34 and GLYCAM1 peripheral node addressins (PNAds) expressed on the lumenal side of high endothelial venules (HEVs). The recognition of PNAds by SELL initiates a multistep process comprising tethering and rolling of blood lymphocytes on HEVs against the blood flow, followed by chemokine signaling, integrin-mediated lymphocyte adhesion onto endothelial cells and lymphocyte transendothelial migration. Modulates rolling velocity and differential T and B lymphocyte recruitment into peripheral lymph nodes, with a major role in B lymphocyte homing. Might be redundant in sulfation of MADCAM1 and lymphocyte trafficking to mesenteric lymph nodes. Can also sulfonate core 3 GlcNAcbeta1-3GalNAc-R based glycans as well as GlcNAcbeta1-3Galbeta1-Glc, GlcNAcbeta1-6ManOMe and GlcNAcbeta1-2Man oligosaccharides, which might be ectopically expressed during tumorigenesis. The polypeptide is Carbohydrate sulfotransferase 4 (Chst4) (Mus musculus (Mouse)).